Here is a 152-residue protein sequence, read N- to C-terminus: Troponin C (152 aa).

Position 1 is an N-acetylthreonine (threonine 1). 4 consecutive EF-hand domains span residues 9–44 (KQIL…LGLL), 45–80 (VKDD…KLKE), 82–117 (LDER…LGDE), and 118–152 (LTEE…SSDA). Residues aspartate 131, aspartate 133, serine 135, threonine 137, and glutamate 142 each coordinate Ca(2+).

This sequence belongs to the troponin C family.

Functionally, troponin is the central regulatory protein of striated muscle contraction. Tn consists of three components: Tn-I which is the inhibitor of actomyosin ATPase, Tn-T which contains the binding site for tropomyosin and Tn-C. The binding of calcium to Tn-C abolishes the inhibitory action of Tn on actin filaments. The chain is Troponin C from Mizuhopecten yessoensis (Japanese scallop).